We begin with the raw amino-acid sequence, 418 residues long: Glutamyl-tRNA reductase (418 aa).

Residues threonine 49–arginine 52, serine 107, glutamate 112–glutamine 114, and glutamine 118 contribute to the substrate site. Residue cysteine 50 is the Nucleophile of the active site. Glycine 187 to isoleucine 192 contacts NADP(+).

It belongs to the glutamyl-tRNA reductase family. In terms of assembly, homodimer.

It carries out the reaction (S)-4-amino-5-oxopentanoate + tRNA(Glu) + NADP(+) = L-glutamyl-tRNA(Glu) + NADPH + H(+). It functions in the pathway porphyrin-containing compound metabolism; protoporphyrin-IX biosynthesis; 5-aminolevulinate from L-glutamyl-tRNA(Glu): step 1/2. Catalyzes the NADPH-dependent reduction of glutamyl-tRNA(Glu) to glutamate 1-semialdehyde (GSA). This chain is Glutamyl-tRNA reductase, found in Vibrio parahaemolyticus serotype O3:K6 (strain RIMD 2210633).